Reading from the N-terminus, the 173-residue chain is 3-hydroxydecanoyl-[acyl-carrier-protein] dehydratase (173 aa).

His71 is an active-site residue.

The protein belongs to the thioester dehydratase family. FabA subfamily. Homodimer.

It is found in the cytoplasm. The catalysed reaction is a (3R)-hydroxyacyl-[ACP] = a (2E)-enoyl-[ACP] + H2O. It catalyses the reaction (3R)-hydroxydecanoyl-[ACP] = (2E)-decenoyl-[ACP] + H2O. It carries out the reaction (2E)-decenoyl-[ACP] = (3Z)-decenoyl-[ACP]. It functions in the pathway lipid metabolism; fatty acid biosynthesis. Necessary for the introduction of cis unsaturation into fatty acids. Catalyzes the dehydration of (3R)-3-hydroxydecanoyl-ACP to E-(2)-decenoyl-ACP and then its isomerization to Z-(3)-decenoyl-ACP. Can catalyze the dehydratase reaction for beta-hydroxyacyl-ACPs with saturated chain lengths up to 16:0, being most active on intermediate chain length. In Bradyrhizobium sp. (strain ORS 278), this protein is 3-hydroxydecanoyl-[acyl-carrier-protein] dehydratase.